The chain runs to 385 residues: 1-deoxy-D-xylulose 5-phosphate reductoisomerase (385 aa).

NADPH-binding residues include Thr13, Gly14, Ser15, Ile16, Asn40, and Asn122. Lys123 contributes to the 1-deoxy-D-xylulose 5-phosphate binding site. Glu124 contributes to the NADPH binding site. Position 148 (Asp148) interacts with Mn(2+). 4 residues coordinate 1-deoxy-D-xylulose 5-phosphate: Ser149, Glu150, Ser177, and His200. Glu150 is a Mn(2+) binding site. Gly206 provides a ligand contact to NADPH. 1-deoxy-D-xylulose 5-phosphate-binding residues include Ser213, Asn218, Lys219, and Glu222. Glu222 serves as a coordination point for Mn(2+).

The protein belongs to the DXR family. Mg(2+) serves as cofactor. The cofactor is Mn(2+).

The catalysed reaction is 2-C-methyl-D-erythritol 4-phosphate + NADP(+) = 1-deoxy-D-xylulose 5-phosphate + NADPH + H(+). It functions in the pathway isoprenoid biosynthesis; isopentenyl diphosphate biosynthesis via DXP pathway; isopentenyl diphosphate from 1-deoxy-D-xylulose 5-phosphate: step 1/6. Catalyzes the NADPH-dependent rearrangement and reduction of 1-deoxy-D-xylulose-5-phosphate (DXP) to 2-C-methyl-D-erythritol 4-phosphate (MEP). In Francisella tularensis subsp. holarctica (strain FTNF002-00 / FTA), this protein is 1-deoxy-D-xylulose 5-phosphate reductoisomerase.